A 3471-amino-acid polypeptide reads, in one-letter code: Abnormal spindle-like microcephaly-associated protein homolog (3471 aa).

The segment at 1–26 is disordered; the sequence is MANRRVGRGCWEVSPTERRPPAAEEE. A phosphoserine mark is found at serine 274, serine 277, serine 361, serine 386, and serine 419. Polar residues predominate over residues 555–564; that stretch reads EVTPSSTTAS. Positions 555–576 are disordered; the sequence is EVTPSSTTASVARKRKSDGSME. At serine 599 the chain carries Phosphoserine. The Calponin-homology (CH) 1 domain occupies 914-1050; the sequence is KASKEILLAF…LLWKIAFAFQ (137 aa). A coiled-coil region spans residues 1051-1072; it reads VDISLNLDQLKEEIAFLKHTKS. Serine 1097 carries the phosphoserine modification. The region spanning 1104 to 1255 is the Calponin-homology (CH) 2 domain; that stretch reads SENIKLLMDW…YLSFLCARLL (152 aa). IQ domains are found at residues 1341–1372, 1387–1416, 1576–1607, 1599–1628, 1626–1655, 1649–1678, 1722–1751, 1745–1776, 1795–1824, 1818–1847, 1868–1897, 1891–1922, 1941–1972, 1964–1995, 2014–2043, 2037–2068, 2087–2118, 2110–2141, 2160–2191, 2183–2212, 2233–2264, 2256–2287, 2305–2336, 2378–2409, 2401–2432, 2451–2482, 2524–2555, 2659–2690, 2682–2713, 2732–2761, 2853–2884, 2903–2932, 2926–2957, 2948–2979, 3023–3054, 3073–3104, 3134–3163, 3175–3204, and 3198–3229; these read QNKA…IILQ, YLWA…MLKS, LKKT…VIIQ, MKKA…KTRS, TRSA…SVIK, ILTS…ATIK, MRES…AVIS, QRKA…IVIQ, VKKA…AALK, QSIA…SIIK, TKAA…AALK, EHQA…LVIQ, LRHA…IIIQ, QHKC…LLIQ, TKAA…AAVT, CNKA…IIIQ, LKKT…TFIK, MHRA…IVIQ, ILKA…TLIQ, MQIA…ITKT, LRHS…TLIQ, MHIA…IWIQ, VQNA…TFIQ, QRHS…TLIQ, MHSS…IFVQ, LRKS…VLIQ, QWHS…IIIQ, RTQA…TLIQ, MHRA…VVIQ, VQKS…EKMA, QKRA…VVLQ, IRSS…STIK, IKNS…KIQA, KVKA…KIIQ, RHRA…LVIQ, FKKS…RLLH, QVNS…SIKK, QNRA…GIIK, and FTSG…IRLS.

It localises to the cytoplasm. The protein localises to the cytoskeleton. The protein resides in the spindle. It is found in the nucleus. Functionally, probable role in mitotic spindle regulation and coordination of mitotic processes. May have a preferential role in regulating neurogenesis. This is Abnormal spindle-like microcephaly-associated protein homolog (ASPM) from Pongo pygmaeus (Bornean orangutan).